A 502-amino-acid polypeptide reads, in one-letter code: Glycerol kinase (502 aa).

Thr-14 serves as a coordination point for ADP. ATP-binding residues include Thr-14, Thr-15, and Ser-16. Thr-14 provides a ligand contact to sn-glycerol 3-phosphate. Arg-18 contacts ADP. Sn-glycerol 3-phosphate contacts are provided by Arg-84, Glu-85, and Tyr-136. Positions 84, 85, and 136 each coordinate glycerol. His-232 bears the Phosphohistidine; by HPr mark. A sn-glycerol 3-phosphate-binding site is contributed by Asp-246. Residues Asp-246 and Gln-247 each contribute to the glycerol site. ADP-binding residues include Thr-268 and Gly-311. Residues Thr-268, Gly-311, Gln-315, and Gly-412 each contribute to the ATP site. Gly-412 and Asn-416 together coordinate ADP.

It belongs to the FGGY kinase family. As to quaternary structure, homotetramer and homodimer (in equilibrium). Post-translationally, the phosphoenolpyruvate-dependent sugar phosphotransferase system (PTS), including enzyme I, and histidine-containing protein (HPr) are required for the phosphorylation, which leads to the activation of the enzyme.

The catalysed reaction is glycerol + ATP = sn-glycerol 3-phosphate + ADP + H(+). Its pathway is polyol metabolism; glycerol degradation via glycerol kinase pathway; sn-glycerol 3-phosphate from glycerol: step 1/1. With respect to regulation, activated by phosphorylation and inhibited by fructose 1,6-bisphosphate (FBP). Key enzyme in the regulation of glycerol uptake and metabolism. Catalyzes the phosphorylation of glycerol to yield sn-glycerol 3-phosphate. In Streptococcus gordonii (strain Challis / ATCC 35105 / BCRC 15272 / CH1 / DL1 / V288), this protein is Glycerol kinase.